A 318-amino-acid polypeptide reads, in one-letter code: NADH-ubiquinone oxidoreductase chain 1 (318 aa).

A run of 8 helical transmembrane segments spans residues 2–22 (FFIN…FLTL), 70–90 (MFIL…IPLP), 100–120 (LGVL…LWSG), 147–167 (AIIL…TLII), 171–191 (HMWL…STLA), 223–243 (FFLA…ILFF), 253–273 (ELYS…FLWI), and 294–314 (LPLT…TASI).

This sequence belongs to the complex I subunit 1 family. In terms of assembly, core subunit of respiratory chain NADH dehydrogenase (Complex I) which is composed of 45 different subunits.

Its subcellular location is the mitochondrion inner membrane. The catalysed reaction is a ubiquinone + NADH + 5 H(+)(in) = a ubiquinol + NAD(+) + 4 H(+)(out). In terms of biological role, core subunit of the mitochondrial membrane respiratory chain NADH dehydrogenase (Complex I) which catalyzes electron transfer from NADH through the respiratory chain, using ubiquinone as an electron acceptor. Essential for the catalytic activity and assembly of complex I. This is NADH-ubiquinone oxidoreductase chain 1 (MT-ND1) from Canis lupus familiaris (Dog).